Consider the following 202-residue polypeptide: MKKQLTKKQEEILEFIKKRIKEKGYPPAVREICEATGLKSTSTVHGHLTRLEKKGYIRRDPSKPRAIEIVDDDFYVHRNVIRLPLVGKVTAGEPILAVENIEDTITLPYDLVGTEDAFLLRVKGDSMIDAGIFDNDIIIVKRQNVAENGDIVVALIDDEATVKRFFKESDHIRLQPENKAMEPIIVKDVKILGKVIGLIRRM.

Residues 29–49 constitute a DNA-binding region (H-T-H motif); sequence VREICEATGLKSTSTVHGHLT. Catalysis depends on for autocatalytic cleavage activity residues Ser126 and Lys163.

It belongs to the peptidase S24 family. In terms of assembly, homodimer.

The enzyme catalyses Hydrolysis of Ala-|-Gly bond in repressor LexA.. Represses a number of genes involved in the response to DNA damage (SOS response), including recA and lexA. In the presence of single-stranded DNA, RecA interacts with LexA causing an autocatalytic cleavage which disrupts the DNA-binding part of LexA, leading to derepression of the SOS regulon and eventually DNA repair. The polypeptide is LexA repressor (Caldicellulosiruptor saccharolyticus (strain ATCC 43494 / DSM 8903 / Tp8T 6331)).